The following is a 132-amino-acid chain: ATP synthase epsilon chain 1 (132 aa).

The protein belongs to the ATPase epsilon chain family. F-type ATPases have 2 components, CF(1) - the catalytic core - and CF(0) - the membrane proton channel. CF(1) has five subunits: alpha(3), beta(3), gamma(1), delta(1), epsilon(1). CF(0) has three main subunits: a, b and c.

The protein localises to the cell inner membrane. Functionally, produces ATP from ADP in the presence of a proton gradient across the membrane. This chain is ATP synthase epsilon chain 1, found in Cereibacter sphaeroides (strain ATCC 17023 / DSM 158 / JCM 6121 / CCUG 31486 / LMG 2827 / NBRC 12203 / NCIMB 8253 / ATH 2.4.1.) (Rhodobacter sphaeroides).